Here is a 239-residue protein sequence, read N- to C-terminus: ATP-dependent dethiobiotin synthetase BioD (239 aa).

ATP is bound at residue 15-20 (EIGKTF). Mg(2+) is bound at residue Thr19. Lys40 is a catalytic residue. ATP contacts are provided by residues Asp57, 118–121 (EGVG), and 178–179 (NH). Mg(2+)-binding residues include Asp57 and Glu118.

Belongs to the dethiobiotin synthetase family. In terms of assembly, homodimer. The cofactor is Mg(2+).

Its subcellular location is the cytoplasm. The enzyme catalyses (7R,8S)-7,8-diammoniononanoate + CO2 + ATP = (4R,5S)-dethiobiotin + ADP + phosphate + 3 H(+). Its pathway is cofactor biosynthesis; biotin biosynthesis; biotin from 7,8-diaminononanoate: step 1/2. Its function is as follows. Catalyzes a mechanistically unusual reaction, the ATP-dependent insertion of CO2 between the N7 and N8 nitrogen atoms of 7,8-diaminopelargonic acid (DAPA, also called 7,8-diammoniononanoate) to form a ureido ring. The chain is ATP-dependent dethiobiotin synthetase BioD from Burkholderia multivorans (strain ATCC 17616 / 249).